A 124-amino-acid chain; its full sequence is Small ribosomal subunit protein uS12 (124 aa).

The residue at position 89 (D89) is a 3-methylthioaspartic acid.

Belongs to the universal ribosomal protein uS12 family. In terms of assembly, part of the 30S ribosomal subunit. Contacts proteins S8 and S17. May interact with IF1 in the 30S initiation complex.

Functionally, with S4 and S5 plays an important role in translational accuracy. Interacts with and stabilizes bases of the 16S rRNA that are involved in tRNA selection in the A site and with the mRNA backbone. Located at the interface of the 30S and 50S subunits, it traverses the body of the 30S subunit contacting proteins on the other side and probably holding the rRNA structure together. The combined cluster of proteins S8, S12 and S17 appears to hold together the shoulder and platform of the 30S subunit. The protein is Small ribosomal subunit protein uS12 of Klebsiella pneumoniae (strain 342).